Consider the following 516-residue polypeptide: Polyprenol-phosphate-mannose--protein mannosyltransferase (516 aa).

The span at 1–11 (MTALDTDTPTA) shows a compositional bias: polar residues. The tract at residues 1 to 23 (MTALDTDTPTAGRSAPLISPGPV) is disordered. 9 helical membrane-spanning segments follow: residues 113 to 133 (YNGL…VMLV), 143 to 163 (STLV…SFVS), 166 to 186 (TALL…CLMV), 234 to 254 (WSGL…DAIA), 275 to 295 (AAYV…APWF), 384 to 404 (VMLV…GWAL), 413 to 433 (WRYG…FADI), 437 to 457 (MYFF…ALIL), and 473 to 493 (LGLL…AWMY).

The protein belongs to the glycosyltransferase 39 family.

Its subcellular location is the cell membrane. It participates in protein modification; protein glycosylation. In terms of biological role, protein O-mannosyltransferase that catalyzes the transfer of a single mannose residue from a polyprenol phospho-mannosyl lipidic donor to the hydroxyl group of selected serine and threonine residues in acceptor proteins. Involved in DNA conjugation, in at least the recipient strain. The polypeptide is Polyprenol-phosphate-mannose--protein mannosyltransferase (pmt) (Mycolicibacterium smegmatis (strain MKD8) (Mycobacterium smegmatis)).